A 206-amino-acid chain; its full sequence is Protein GrpE (206 aa).

The span at 1 to 14 (MDKKNEQQEVREEN) shows a compositional bias: basic and acidic residues. The disordered stretch occupies residues 1–56 (MDKKNEQQEVREENDTSINQESETQVELEEEVVNEECETSSEKTDEKEVDDENVTD). A compositionally biased stretch (acidic residues) spans 24 to 39 (TQVELEEEVVNEECET).

This sequence belongs to the GrpE family. As to quaternary structure, homodimer.

It is found in the cytoplasm. Participates actively in the response to hyperosmotic and heat shock by preventing the aggregation of stress-denatured proteins, in association with DnaK and GrpE. It is the nucleotide exchange factor for DnaK and may function as a thermosensor. Unfolded proteins bind initially to DnaJ; upon interaction with the DnaJ-bound protein, DnaK hydrolyzes its bound ATP, resulting in the formation of a stable complex. GrpE releases ADP from DnaK; ATP binding to DnaK triggers the release of the substrate protein, thus completing the reaction cycle. Several rounds of ATP-dependent interactions between DnaJ, DnaK and GrpE are required for fully efficient folding. The polypeptide is Protein GrpE (Clostridioides difficile (strain 630) (Peptoclostridium difficile)).